Reading from the N-terminus, the 391-residue chain is Methionine import ATP-binding protein MetN 2 (391 aa).

The ABC transporter domain maps to 44-280 (VHVGKVFATP…PRHGATRALL (237 aa)). 77–84 (GRSGAGKS) contacts ATP.

The protein belongs to the ABC transporter superfamily. Methionine importer (TC 3.A.1.24) family. In terms of assembly, the complex is composed of two ATP-binding proteins (MetN), two transmembrane proteins (MetI) and a solute-binding protein (MetQ).

Its subcellular location is the cell inner membrane. The enzyme catalyses L-methionine(out) + ATP + H2O = L-methionine(in) + ADP + phosphate + H(+). The catalysed reaction is D-methionine(out) + ATP + H2O = D-methionine(in) + ADP + phosphate + H(+). In terms of biological role, part of the ABC transporter complex MetNIQ involved in methionine import. Responsible for energy coupling to the transport system. This chain is Methionine import ATP-binding protein MetN 2, found in Burkholderia ambifaria (strain ATCC BAA-244 / DSM 16087 / CCUG 44356 / LMG 19182 / AMMD) (Burkholderia cepacia (strain AMMD)).